The following is a 248-amino-acid chain: tRNA (guanine-N(1)-)-methyltransferase (248 aa).

Residues G117 and 137–142 (IGDFVL) contribute to the S-adenosyl-L-methionine site.

The protein belongs to the RNA methyltransferase TrmD family. As to quaternary structure, homodimer.

It is found in the cytoplasm. It catalyses the reaction guanosine(37) in tRNA + S-adenosyl-L-methionine = N(1)-methylguanosine(37) in tRNA + S-adenosyl-L-homocysteine + H(+). Its function is as follows. Specifically methylates guanosine-37 in various tRNAs. This is tRNA (guanine-N(1)-)-methyltransferase from Polynucleobacter asymbioticus (strain DSM 18221 / CIP 109841 / QLW-P1DMWA-1) (Polynucleobacter necessarius subsp. asymbioticus).